The chain runs to 159 residues: uncharacterized protein (159 aa).

The protein belongs to the SufE family.

This is an uncharacterized protein from Synechocystis sp. (strain ATCC 27184 / PCC 6803 / Kazusa).